The following is a 394-amino-acid chain: DNA replication and repair protein RecF (394 aa).

An ATP-binding site is contributed by 30–37; it reads GRNGFGKT.

The protein belongs to the RecF family.

The protein localises to the cytoplasm. The RecF protein is involved in DNA metabolism; it is required for DNA replication and normal SOS inducibility. RecF binds preferentially to single-stranded, linear DNA. It also seems to bind ATP. The polypeptide is DNA replication and repair protein RecF (Corynebacterium glutamicum (strain ATCC 13032 / DSM 20300 / JCM 1318 / BCRC 11384 / CCUG 27702 / LMG 3730 / NBRC 12168 / NCIMB 10025 / NRRL B-2784 / 534)).